A 315-amino-acid polypeptide reads, in one-letter code: Methionyl-tRNA formyltransferase (315 aa).

113–116 (SLLP) serves as a coordination point for (6S)-5,6,7,8-tetrahydrofolate.

This sequence belongs to the Fmt family.

It catalyses the reaction L-methionyl-tRNA(fMet) + (6R)-10-formyltetrahydrofolate = N-formyl-L-methionyl-tRNA(fMet) + (6S)-5,6,7,8-tetrahydrofolate + H(+). Attaches a formyl group to the free amino group of methionyl-tRNA(fMet). The formyl group appears to play a dual role in the initiator identity of N-formylmethionyl-tRNA by promoting its recognition by IF2 and preventing the misappropriation of this tRNA by the elongation apparatus. This is Methionyl-tRNA formyltransferase from Klebsiella pneumoniae subsp. pneumoniae (strain ATCC 700721 / MGH 78578).